Consider the following 178-residue polypeptide: Nicotinamide-nucleotide adenylyltransferase (178 aa).

This sequence belongs to the archaeal NMN adenylyltransferase family.

It localises to the cytoplasm. It catalyses the reaction beta-nicotinamide D-ribonucleotide + ATP + H(+) = diphosphate + NAD(+). The protein operates within cofactor biosynthesis; NAD(+) biosynthesis; NAD(+) from nicotinamide D-ribonucleotide: step 1/1. The sequence is that of Nicotinamide-nucleotide adenylyltransferase from Pyrobaculum aerophilum (strain ATCC 51768 / DSM 7523 / JCM 9630 / CIP 104966 / NBRC 100827 / IM2).